Consider the following 103-residue polypeptide: PTS system lactose-specific EIIA component (103 aa).

The PTS EIIA type-3 domain occupies 1–102; that stretch reads MNREEVQLLG…MKHLLEFYKR (102 aa). Catalysis depends on histidine 78, which acts as the Tele-phosphohistidine intermediate. Residue histidine 78 is modified to Phosphohistidine; by HPr. Aspartate 81 serves as a coordination point for Mg(2+).

As to quaternary structure, homotrimer. It depends on Mg(2+) as a cofactor.

It is found in the cytoplasm. Functionally, the phosphoenolpyruvate-dependent sugar phosphotransferase system (sugar PTS), a major carbohydrate active transport system, catalyzes the phosphorylation of incoming sugar substrates concomitantly with their translocation across the cell membrane. The enzyme II LacEF PTS system is involved in lactose transport. The protein is PTS system lactose-specific EIIA component of Staphylococcus aureus (strain COL).